We begin with the raw amino-acid sequence, 219 residues long: 2-C-methyl-D-erythritol 4-phosphate cytidylyltransferase (219 aa).

The protein belongs to the IspD/TarI cytidylyltransferase family. IspD subfamily.

It carries out the reaction 2-C-methyl-D-erythritol 4-phosphate + CTP + H(+) = 4-CDP-2-C-methyl-D-erythritol + diphosphate. It functions in the pathway isoprenoid biosynthesis; isopentenyl diphosphate biosynthesis via DXP pathway; isopentenyl diphosphate from 1-deoxy-D-xylulose 5-phosphate: step 2/6. Functionally, catalyzes the formation of 4-diphosphocytidyl-2-C-methyl-D-erythritol from CTP and 2-C-methyl-D-erythritol 4-phosphate (MEP). The sequence is that of 2-C-methyl-D-erythritol 4-phosphate cytidylyltransferase from Bacteroides fragilis (strain ATCC 25285 / DSM 2151 / CCUG 4856 / JCM 11019 / LMG 10263 / NCTC 9343 / Onslow / VPI 2553 / EN-2).